Reading from the N-terminus, the 102-residue chain is Small ribosomal subunit protein uS10 (102 aa).

It belongs to the universal ribosomal protein uS10 family. As to quaternary structure, part of the 30S ribosomal subunit.

Functionally, involved in the binding of tRNA to the ribosomes. This chain is Small ribosomal subunit protein uS10, found in Paramagnetospirillum magneticum (strain ATCC 700264 / AMB-1) (Magnetospirillum magneticum).